The sequence spans 172 residues: NADH-quinone oxidoreductase subunit B (172 aa).

Residues Cys-46, Cys-47, Cys-111, and Cys-141 each coordinate [4Fe-4S] cluster.

It belongs to the complex I 20 kDa subunit family. As to quaternary structure, NDH-1 is composed of 14 different subunits. Subunits NuoB, C, D, E, F, and G constitute the peripheral sector of the complex. It depends on [4Fe-4S] cluster as a cofactor.

It localises to the cell membrane. It catalyses the reaction a quinone + NADH + 5 H(+)(in) = a quinol + NAD(+) + 4 H(+)(out). NDH-1 shuttles electrons from NADH, via FMN and iron-sulfur (Fe-S) centers, to quinones in the respiratory chain. The immediate electron acceptor for the enzyme in this species is believed to be a menaquinone. Couples the redox reaction to proton translocation (for every two electrons transferred, four hydrogen ions are translocated across the cytoplasmic membrane), and thus conserves the redox energy in a proton gradient. This is NADH-quinone oxidoreductase subunit B from Brevibacillus brevis (strain 47 / JCM 6285 / NBRC 100599).